A 971-amino-acid polypeptide reads, in one-letter code: Reversion-inducing cysteine-rich protein with Kazal motifs (971 aa).

Residues 1–22 form the signal peptide; sequence MASVRASPRSALLLLLAAAGVA. Residues 37 to 84 form a Knot 1 repeat; that stretch reads CCNHSKDNQMCRDVCEQIFSSKSESRLKHLLQRAPDYCPETMVEIWSC. The segment at 37–338 is 5 X Knot repeats; that stretch reads CCNHSKDNQM…NPVEVSMLTC (302 aa). N-linked (GlcNAc...) asparagine glycans are attached at residues Asn-39 and Asn-86. 2 Knot repeats span residues 104-141 and 151-197; these read CCEL…LFSC and CCSY…LIHC. N-linked (GlcNAc...) asparagine glycosylation is present at Asn-200. 2 Knot repeats span residues 216 to 263 and 292 to 338; these read CCDR…LWQC and CCSK…MLTC. N-linked (GlcNAc...) asparagine glycosylation is found at Asn-297 and Asn-352. Kazal-like domains follow at residues 627–673, 698–752, and 753–789; these read TFTG…PCIS, TFDK…PCQP, and FCRA…PCQA. Cystine bridges form between Cys-633/Cys-658, Cys-635/Cys-654, Cys-643/Cys-671, Cys-716/Cys-735, Cys-724/Cys-750, and Cys-761/Cys-787. One can recognise a Kazal-like 2; degenerate domain in the interval 704–750; that stretch reads CSQYECVPRQLTCDQARDPVCDTDHMEHSNLCTLYQRGKSLSYRGPC. The GPI-anchor amidated serine moiety is linked to residue Ser-942. Residues 943–971 constitute a propeptide, removed in mature form; the sequence is SAVVGRPLFHSLLLLLSLGLTVHLLWTRP.

The protein belongs to the RECK family. As to quaternary structure, interacts (via knot repeats) with WNT7A (via disordered linker region); the interaction is direct. Interacts (via knot repeats) with WNT7B (via disordered linker region); the interaction is direct. Interacts with ADGRA2; the interaction is direct. Interacts with MMP9.

Its subcellular location is the cell membrane. Functionally, functions together with ADGRA2 to enable brain endothelial cells to selectively respond to Wnt7 signals (WNT7A or WNT7B). Plays a key role in Wnt7-specific responses: required for central nervous system (CNS) angiogenesis and blood-brain barrier regulation. Acts as a Wnt7-specific coactivator of canonical Wnt signaling by decoding Wnt ligands: acts by interacting specifically with the disordered linker region of Wnt7, thereby conferring ligand selectivity for Wnt7. ADGRA2 is then required to deliver RECK-bound Wnt7 to frizzled by assembling a higher-order RECK-ADGRA2-Fzd-LRP5-LRP6 complex. Also acts as a serine protease inhibitor: negatively regulates matrix metalloproteinase-9 (MMP9) by suppressing MMP9 secretion and by direct inhibition of its enzymatic activity. Also inhibits metalloproteinase activity of MMP2 and MMP14 (MT1-MMP). In Mus musculus (Mouse), this protein is Reversion-inducing cysteine-rich protein with Kazal motifs.